Here is a 403-residue protein sequence, read N- to C-terminus: S-adenosylmethionine synthase (403 aa).

Histidine 17 provides a ligand contact to ATP. Aspartate 19 provides a ligand contact to Mg(2+). Glutamate 45 lines the K(+) pocket. L-methionine contacts are provided by glutamate 58 and glutamine 104. The segment at 104–114 (QSSDIAQGVNT) is flexible loop. Residues 179–181 (DGK), 250–251 (KF), aspartate 259, 265–266 (RK), alanine 282, and lysine 286 contribute to the ATP site. Position 259 (aspartate 259) interacts with L-methionine. Lysine 290 is an L-methionine binding site.

It belongs to the AdoMet synthase family. As to quaternary structure, homotetramer; dimer of dimers. Requires Mg(2+) as cofactor. The cofactor is K(+).

It localises to the cytoplasm. The enzyme catalyses L-methionine + ATP + H2O = S-adenosyl-L-methionine + phosphate + diphosphate. The protein operates within amino-acid biosynthesis; S-adenosyl-L-methionine biosynthesis; S-adenosyl-L-methionine from L-methionine: step 1/1. In terms of biological role, catalyzes the formation of S-adenosylmethionine (AdoMet) from methionine and ATP. The overall synthetic reaction is composed of two sequential steps, AdoMet formation and the subsequent tripolyphosphate hydrolysis which occurs prior to release of AdoMet from the enzyme. The chain is S-adenosylmethionine synthase from Mycobacterium leprae (strain Br4923).